Here is a 276-residue protein sequence, read N- to C-terminus: Ribosomal RNA small subunit methyltransferase A (276 aa).

Residues H15, L17, G42, E64, D89, and N108 each coordinate S-adenosyl-L-methionine.

Belongs to the class I-like SAM-binding methyltransferase superfamily. rRNA adenine N(6)-methyltransferase family. RsmA subfamily.

It localises to the cytoplasm. The catalysed reaction is adenosine(1518)/adenosine(1519) in 16S rRNA + 4 S-adenosyl-L-methionine = N(6)-dimethyladenosine(1518)/N(6)-dimethyladenosine(1519) in 16S rRNA + 4 S-adenosyl-L-homocysteine + 4 H(+). Functionally, specifically dimethylates two adjacent adenosines (A1518 and A1519) in the loop of a conserved hairpin near the 3'-end of 16S rRNA in the 30S particle. May play a critical role in biogenesis of 30S subunits. This is Ribosomal RNA small subunit methyltransferase A from Prochlorococcus marinus (strain MIT 9312).